Reading from the N-terminus, the 214-residue chain is Pyridoxine/pyridoxamine 5'-phosphate oxidase (214 aa).

Residues 9–12 (RKDY) and lysine 67 contribute to the substrate site. FMN is bound by residues 62-67 (RMVLLK), 77-78 (FT), arginine 83, lysine 84, and glutamine 106. Tyrosine 124, arginine 128, and serine 132 together coordinate substrate. FMN-binding positions include 141-142 (QS) and tryptophan 186. Residue 192-194 (RLH) coordinates substrate. Arginine 196 is a binding site for FMN.

Belongs to the pyridoxamine 5'-phosphate oxidase family. Homodimer. FMN is required as a cofactor.

It carries out the reaction pyridoxamine 5'-phosphate + O2 + H2O = pyridoxal 5'-phosphate + H2O2 + NH4(+). The enzyme catalyses pyridoxine 5'-phosphate + O2 = pyridoxal 5'-phosphate + H2O2. It functions in the pathway cofactor metabolism; pyridoxal 5'-phosphate salvage; pyridoxal 5'-phosphate from pyridoxamine 5'-phosphate: step 1/1. Its pathway is cofactor metabolism; pyridoxal 5'-phosphate salvage; pyridoxal 5'-phosphate from pyridoxine 5'-phosphate: step 1/1. Its function is as follows. Catalyzes the oxidation of either pyridoxine 5'-phosphate (PNP) or pyridoxamine 5'-phosphate (PMP) into pyridoxal 5'-phosphate (PLP). The polypeptide is Pyridoxine/pyridoxamine 5'-phosphate oxidase (Nostoc sp. (strain PCC 7120 / SAG 25.82 / UTEX 2576)).